Reading from the N-terminus, the 407-residue chain is Peptidase T (407 aa).

His78 is a Zn(2+) binding site. Asp80 is an active-site residue. Asp139 is a binding site for Zn(2+). The active-site Proton acceptor is Glu173. The Zn(2+) site is built by Glu174, Asp196, and His378.

The protein belongs to the peptidase M20B family. Zn(2+) serves as cofactor.

It is found in the cytoplasm. It carries out the reaction Release of the N-terminal residue from a tripeptide.. In terms of biological role, cleaves the N-terminal amino acid of tripeptides. The chain is Peptidase T from Shewanella pealeana (strain ATCC 700345 / ANG-SQ1).